The chain runs to 89 residues: Large ribosomal subunit protein bL27 (89 aa).

The disordered stretch occupies residues 1 to 21; the sequence is MAHKKAGGSSRNGRDSKGKRL.

Belongs to the bacterial ribosomal protein bL27 family.

The sequence is that of Large ribosomal subunit protein bL27 from Bradyrhizobium sp. (strain ORS 278).